Reading from the N-terminus, the 354-residue chain is Fructose-1,6-bisphosphatase class 1 (354 aa).

Mg(2+) is bound by residues E112, D134, L136, and D137. Substrate contacts are provided by residues 137-140, N229, Y257, and K287; that span reads DGSS. E293 contributes to the Mg(2+) binding site.

The protein belongs to the FBPase class 1 family. As to quaternary structure, homotetramer. It depends on Mg(2+) as a cofactor.

Its subcellular location is the cytoplasm. The catalysed reaction is beta-D-fructose 1,6-bisphosphate + H2O = beta-D-fructose 6-phosphate + phosphate. It functions in the pathway carbohydrate biosynthesis; Calvin cycle. The sequence is that of Fructose-1,6-bisphosphatase class 1 from Trichodesmium erythraeum (strain IMS101).